A 146-amino-acid chain; its full sequence is Hemoglobin subunit beta-1 (146 aa).

One can recognise a Globin domain in the interval 2–146; the sequence is HWTAEEKQLI…VAHALARRYH (145 aa). Residues His63 and His92 each coordinate heme b.

The protein belongs to the globin family. Heterotetramer of two alpha chains and two beta chains. In terms of tissue distribution, red blood cells.

Involved in oxygen transport from the lung to the various peripheral tissues. This Iguana iguana (Common iguana) protein is Hemoglobin subunit beta-1 (HBB1).